Consider the following 951-residue polypeptide: Valine--tRNA ligase (951 aa).

The short motif at 42 to 52 (PNVTGSLHMGH) is the 'HIGH' region element. The short motif at 554 to 558 (KMSKS) is the 'KMSKS' region element. K557 is an ATP binding site. The stretch at 882–951 (LIDKDAELAR…EEQKATIAAL (70 aa)) forms a coiled coil.

Belongs to the class-I aminoacyl-tRNA synthetase family. ValS type 1 subfamily. Monomer.

Its subcellular location is the cytoplasm. The enzyme catalyses tRNA(Val) + L-valine + ATP = L-valyl-tRNA(Val) + AMP + diphosphate. Functionally, catalyzes the attachment of valine to tRNA(Val). As ValRS can inadvertently accommodate and process structurally similar amino acids such as threonine, to avoid such errors, it has a 'posttransfer' editing activity that hydrolyzes mischarged Thr-tRNA(Val) in a tRNA-dependent manner. The chain is Valine--tRNA ligase from Vibrio vulnificus (strain CMCP6).